A 202-amino-acid chain; its full sequence is NADH-quinone oxidoreductase subunit C (202 aa).

It belongs to the complex I 30 kDa subunit family. As to quaternary structure, NDH-1 is composed of 14 different subunits. Subunits NuoB, C, D, E, F, and G constitute the peripheral sector of the complex.

The protein resides in the cell inner membrane. The catalysed reaction is a quinone + NADH + 5 H(+)(in) = a quinol + NAD(+) + 4 H(+)(out). Its function is as follows. NDH-1 shuttles electrons from NADH, via FMN and iron-sulfur (Fe-S) centers, to quinones in the respiratory chain. The immediate electron acceptor for the enzyme in this species is believed to be ubiquinone. Couples the redox reaction to proton translocation (for every two electrons transferred, four hydrogen ions are translocated across the cytoplasmic membrane), and thus conserves the redox energy in a proton gradient. This chain is NADH-quinone oxidoreductase subunit C, found in Paracidovorax citrulli (strain AAC00-1) (Acidovorax citrulli).